The following is a 450-amino-acid chain: Chromosomal replication initiator protein DnaA (450 aa).

Residues 1–84 (MENIHDLWDR…AVKFIIPPNQ (84 aa)) are domain I, interacts with DnaA modulators. The domain II stretch occupies residues 84 to 111 (QDDEELEFQSSKKKQRKPYEETNDFPQS). The tract at residues 89 to 108 (LEFQSSKKKQRKPYEETNDF) is disordered. The segment at 112–328 (MLNPKYTFDT…GALIRVVAYS (217 aa)) is domain III, AAA+ region. G156, G158, K159, and T160 together coordinate ATP. Residues 329–450 (SLINKEITAD…QEIQEKLKQL (122 aa)) form a domain IV, binds dsDNA region.

The protein belongs to the DnaA family. Oligomerizes as a right-handed, spiral filament on DNA at oriC.

It is found in the cytoplasm. Functionally, plays an essential role in the initiation and regulation of chromosomal replication. ATP-DnaA binds to the origin of replication (oriC) to initiate formation of the DNA replication initiation complex once per cell cycle. Binds the DnaA box (a 9 base pair repeat at the origin) and separates the double-stranded (ds)DNA. Forms a right-handed helical filament on oriC DNA; dsDNA binds to the exterior of the filament while single-stranded (ss)DNA is stabiized in the filament's interior. The ATP-DnaA-oriC complex binds and stabilizes one strand of the AT-rich DNA unwinding element (DUE), permitting loading of DNA polymerase. After initiation quickly degrades to an ADP-DnaA complex that is not apt for DNA replication. Binds acidic phospholipids. The polypeptide is Chromosomal replication initiator protein DnaA (Geobacillus kaustophilus (strain HTA426)).